We begin with the raw amino-acid sequence, 432 residues long: Enolase (432 aa).

Gln-167 provides a ligand contact to (2R)-2-phosphoglycerate. The active-site Proton donor is the Glu-209. The Mg(2+) site is built by Asp-246, Glu-290, and Asp-317. (2R)-2-phosphoglycerate is bound by residues Lys-342, Arg-371, Ser-372, and Lys-393. Lys-342 (proton acceptor) is an active-site residue.

Belongs to the enolase family. As to quaternary structure, component of the RNA degradosome, a multiprotein complex involved in RNA processing and mRNA degradation. Requires Mg(2+) as cofactor.

It is found in the cytoplasm. It localises to the secreted. The protein localises to the cell surface. The enzyme catalyses (2R)-2-phosphoglycerate = phosphoenolpyruvate + H2O. The protein operates within carbohydrate degradation; glycolysis; pyruvate from D-glyceraldehyde 3-phosphate: step 4/5. Its function is as follows. Catalyzes the reversible conversion of 2-phosphoglycerate (2-PG) into phosphoenolpyruvate (PEP). It is essential for the degradation of carbohydrates via glycolysis. This Escherichia coli O139:H28 (strain E24377A / ETEC) protein is Enolase.